The following is a 317-amino-acid chain: NF-kappa-B inhibitor alpha (317 aa).

Residues 1–39 (MFQAAERPQEWAMEGPRDGLKKERLLDDRHDSGLDSMKD) are disordered. Residues 15-39 (GPRDGLKKERLLDDRHDSGLDSMKD) show a composition bias toward basic and acidic residues. A Glycyl lysine isopeptide (Lys-Gly) (interchain with G-Cter in SUMO); alternate cross-link involves residue lysine 21. Residue lysine 21 forms a Glycyl lysine isopeptide (Lys-Gly) (interchain with G-Cter in ubiquitin); alternate linkage. Residue lysine 22 forms a Glycyl lysine isopeptide (Lys-Gly) (interchain with G-Cter in ubiquitin) linkage. Positions 30–36 (HDSGLDS) match the Destruction motif motif. Phosphoserine; by IKKA and IKKE is present on serine 32. A Phosphoserine; by IKKA, IKKB, IKKE and TBK1 modification is found at serine 36. Tyrosine 42 is modified (phosphotyrosine; by Tyr-kinases). The Nuclear export signal motif lies at 45–54 (MVKELQEIRL). ANK repeat units follow at residues 73–103 (DGDS…DLAF), 110–139 (LQQT…DPEL), 143–172 (RGNT…TPHL), 182–211 (NGHT…DVNA), and 216–245 (NGRT…DVNR). The short motif at 110-120 (LQQTPLHLAVI) is the Nuclear import signal element. 2 positions are modified to (3S)-3-hydroxyasparagine; by HIF1AN; partial: asparagine 210 and asparagine 244. Phosphoserine; by CK2 is present on residues serine 283 and serine 288. At threonine 291 the chain carries Phosphothreonine; by CK2. Position 293 is a phosphoserine; by CK2 (serine 293). A Phosphothreonine; by CK2 modification is found at threonine 299.

Belongs to the NF-kappa-B inhibitor family. Interacts with RELA; the interaction requires the nuclear import signal. Part of a 70-90 kDa complex at least consisting of CHUK, IKBKB, NFKBIA, RELA, ELP1 and MAP3K14. Interacts with NKIRAS1 and NKIRAS2. Interacts with isoform 1 and isoform 2 of RWDD3; the interaction enhances sumoylation. Interacts with PRMT2. Interacts with PRKACA in platelets; this interaction is disrupted by thrombin and collagen. Interacts with MEFV. Interacts with DDRGK1; positively regulates NFKBIA phosphorylation and degradation. Interacts with HNRNPA2B1; the interaction may be mediated by the RRM2 domain of HNRNPA2B1, and HNRNPA2B1 may interact simultaneously with FAM76B and either NFKBIA or NFKBIE to form a complex. As to quaternary structure, (Microbial infection) Interacts with HBV protein X. Phosphorylated at Ser-32 and Ser-36 by IKKA/CHUK and IKKB/IKBKB; disables inhibition of NF-kappa-B DNA-binding activity. Phosphorylation at positions 32 and 36 is prerequisite to recognition by the SCF(FBXW11) and SCF(BTRC) complexes, leading to polyubiquitination and subsequent degradation. Phosphorylated at Ser-32 in response to FK506 treatment: phosphorylation is independent of IKKA/CHUK and IKKB/IKBKB and promotes NFKBIA degradation, followed by NF-kappa-B activation. Phosphorylated at Tyr-42: its effect is however unclear. According to a report, phosphorylation at Tyr-42 activates NF-kappa-B without triggering proteolytic degradation of NFKBIA. According to another publication, phosphorylation at Tyr-42 inhibits NF-kappa-B activity by preventing phosphorylation at Ser-32 and Ser-36 and subsequent ubiquitination and degradation. Post-translationally, polyubiquitinated at Lys-21 and/or Lys-22 following phosphorylation at Ser-32 and Ser-36. Monoubiquitinated at Lys-21 and/or Lys-22 by UBE2D3. Ubiquitin chain elongation is then performed by CDC34 in cooperation with the SCF(FBXW11) E3 ligase complex, building ubiquitin chains from the UBE2D3-primed NFKBIA-linked ubiquitin. The resulting polyubiquitination leads to protein degradation. Also ubiquitinated by the SCF(BTRC) complex following stimulus-dependent phosphorylation at Ser-32 and Ser-36. Deubiquitinated by USP38, leading to NF-kappa-B inhibition. In terms of processing, sumoylated; sumoylation requires the presence of the nuclear import signal. Sumoylation blocks ubiquitination and proteasome-mediated degradation of the protein thereby increasing the protein stability. Hydroxylated by HIF1AN. Post-translationally, (Microbial infection) Deubiquitinated by porcine reproductive and respiratory syndrome virus Nsp2 protein, which thereby interferes with NFKBIA degradation and impairs subsequent NF-kappa-B activation.

The protein localises to the cytoplasm. It localises to the nucleus. Its function is as follows. Inhibits the activity of dimeric NF-kappa-B/REL complexes by trapping REL (RELA/p65 and NFKB1/p50) dimers in the cytoplasm by masking their nuclear localization signals. On cellular stimulation by immune and pro-inflammatory responses, becomes phosphorylated promoting ubiquitination and degradation, enabling the dimeric RELA to translocate to the nucleus and activate transcription. In Homo sapiens (Human), this protein is NF-kappa-B inhibitor alpha (NFKBIA).